Consider the following 57-residue polypeptide: MGKKMEKKRAEMPPARAGILSFWDEEAPGIKIDPDYILYACFAVAVLLIIAHTMAAV.

The Cytoplasmic segment spans residues 1-33; the sequence is MGKKMEKKRAEMPPARAGILSFWDEEAPGIKID. Residues 34-53 traverse the membrane as a helical segment; the sequence is PDYILYACFAVAVLLIIAHT. Topologically, residues 54–57 are extracellular; the sequence is MAAV.

It belongs to the SEC61-beta family. Component of the protein translocase complex. Heterotrimer consisting of alpha (SecY), beta (SecG) and gamma (SecE) subunits. Can form oligomers of the heterotrimer.

It localises to the cell membrane. Involved in protein export. The function of the beta subunit is unknown, but it may be involved in stabilization of the trimeric complex. The protein is Preprotein translocase subunit SecG (secG) of Methanopyrus kandleri (strain AV19 / DSM 6324 / JCM 9639 / NBRC 100938).